We begin with the raw amino-acid sequence, 119 residues long: MNAPPDFRRAASHALWLALALTFACPLPGLADEHPDARRQAQLRHLLLQDCGSCHGLRLTGGLGPALTPEALRGKPRESLVATVLMGRPQTPMPPWAGLLSEDDAGWLVDRLIEGEIAP.

The first 20 residues, 1–20 (MNAPPDFRRAASHALWLALA), serve as a signal peptide directing secretion. Residues C51, C54, and H55 each contribute to the heme c site.

Post-translationally, binds 1 heme c group covalently per subunit.

The protein resides in the periplasm. Monoheme c-type cytochrome. The protein is Cytochrome c55X (nirC) of Pseudomonas aeruginosa (strain ATCC 15692 / DSM 22644 / CIP 104116 / JCM 14847 / LMG 12228 / 1C / PRS 101 / PAO1).